The following is a 387-amino-acid chain: Phosphoglycerate kinase (387 aa).

Residues 21-23, arginine 36, 59-62, arginine 113, and arginine 146 contribute to the substrate site; these read DLN and HLGR. ATP contacts are provided by residues lysine 197, glutamate 314, and 340 to 343; that span reads GGDT.

Belongs to the phosphoglycerate kinase family. As to quaternary structure, monomer.

Its subcellular location is the cytoplasm. The enzyme catalyses (2R)-3-phosphoglycerate + ATP = (2R)-3-phospho-glyceroyl phosphate + ADP. The protein operates within carbohydrate degradation; glycolysis; pyruvate from D-glyceraldehyde 3-phosphate: step 2/5. In Yersinia pestis bv. Antiqua (strain Antiqua), this protein is Phosphoglycerate kinase.